The primary structure comprises 182 residues: Large ribosomal subunit protein uL10 (182 aa).

This sequence belongs to the universal ribosomal protein uL10 family. In terms of assembly, part of the ribosomal stalk of the 50S ribosomal subunit. The N-terminus interacts with L11 and the large rRNA to form the base of the stalk. The C-terminus forms an elongated spine to which L12 dimers bind in a sequential fashion forming a multimeric L10(L12)X complex.

In terms of biological role, forms part of the ribosomal stalk, playing a central role in the interaction of the ribosome with GTP-bound translation factors. This Parafrankia sp. (strain EAN1pec) protein is Large ribosomal subunit protein uL10.